Here is a 968-residue protein sequence, read N- to C-terminus: RNA polymerase-associated protein RapA (968 aa).

A Helicase ATP-binding domain is found at 164 to 334; sequence DVGRRHAPRV…FARLRLLDPN (171 aa). 177-184 provides a ligand contact to ATP; the sequence is DEVGLGKT. Residues 280-283 carry the DEAH box motif; sequence DEAH. One can recognise a Helicase C-terminal domain in the interval 490–662; it reads RVEWLMGYLT…YLAAPENTEG (173 aa).

Belongs to the SNF2/RAD54 helicase family. RapA subfamily. As to quaternary structure, interacts with the RNAP. Has a higher affinity for the core RNAP than for the holoenzyme. Its ATPase activity is stimulated by binding to RNAP.

Functionally, transcription regulator that activates transcription by stimulating RNA polymerase (RNAP) recycling in case of stress conditions such as supercoiled DNA or high salt concentrations. Probably acts by releasing the RNAP, when it is trapped or immobilized on tightly supercoiled DNA. Does not activate transcription on linear DNA. Probably not involved in DNA repair. The protein is RNA polymerase-associated protein RapA of Cronobacter sakazakii (strain ATCC BAA-894) (Enterobacter sakazakii).